The primary structure comprises 248 residues: Large ribosomal subunit protein uL1 (248 aa).

This sequence belongs to the universal ribosomal protein uL1 family. Part of the 50S ribosomal subunit.

In terms of biological role, binds directly to 23S rRNA. The L1 stalk is quite mobile in the ribosome, and is involved in E site tRNA release. Its function is as follows. Protein L1 is also a translational repressor protein, it controls the translation of the L11 operon by binding to its mRNA. The protein is Large ribosomal subunit protein uL1 of Orientia tsutsugamushi (strain Boryong) (Rickettsia tsutsugamushi).